Consider the following 443-residue polypeptide: MQPLRSLCGRALVALIFACGVAGVQSEERGFPPAGATPPALRTGEIVAPPTKTFWPRGSNASLPRSSSPPQMPKGGRMAGPPARTLTPPPCEGPIEIKDTFKYINTVVSCLVFVLGIIGNSTLLRIIYKNKCMRNGPNILIASLALGDLLHIIIDIPINVYKLLAEDWPFGVEMCKLVPFIQKASVGITVLSLCALSIDRYRAVASWSRIKGIGVPKWTAVEIVLIWVVSVVLAVPEALGFDMITTDYKGNRLRICLLHPTQKTAFMQFYKTAKDWWLFSFYFCLPLAITAFFYTLMTCEMLRKKSGMQIALNDHLKQRREVAKTVFCLVLVFALCWLPLHLSRILKLTLYDQNDSNRCELLSFLLVLDYIGINMASLNSCINPIALYLVSKRFKNCFKSCLCCWCQSFEEKQSLEEKQSCLKFKANDHGYDNFRSSNKYSSS.

A signal peptide spans 1–26 (MQPLRSLCGRALVALIFACGVAGVQS). Residues 27 to 102 (EERGFPPAGA…GPIEIKDTFK (76 aa)) are Extracellular-facing. Residues 53–89 (TFWPRGSNASLPRSSSPPQMPKGGRMAGPPARTLTPP) form a disordered region. Residues 59-69 (SNASLPRSSSP) show a composition bias toward polar residues. Asn-60 is a glycosylation site (N-linked (GlcNAc...) asparagine). Residues 103–127 (YINTVVSCLVFVLGIIGNSTLLRII) form a helical membrane-spanning segment. The Cytoplasmic portion of the chain corresponds to 128-138 (YKNKCMRNGPN). A helical membrane pass occupies residues 139–164 (ILIASLALGDLLHIIIDIPINVYKLL). Residues 165–176 (AEDWPFGVEMCK) are Extracellular-facing. An intrachain disulfide couples Cys-175 to Cys-256. The helical transmembrane segment at 177-198 (LVPFIQKASVGITVLSLCALSI) threads the bilayer. The Cytoplasmic portion of the chain corresponds to 199–219 (DRYRAVASWSRIKGIGVPKWT). Residues 220 to 244 (AVEIVLIWVVSVVLAVPEALGFDMI) form a helical membrane-spanning segment. At 245-272 (TTDYKGNRLRICLLHPTQKTAFMQFYKT) the chain is on the extracellular side. A helical transmembrane segment spans residues 273–297 (AKDWWLFSFYFCLPLAITAFFYTLM). The Cytoplasmic segment spans residues 298-325 (TCEMLRKKSGMQIALNDHLKQRREVAKT). Ser-306 carries the post-translational modification Phosphoserine. The helical transmembrane segment at 326–351 (VFCLVLVFALCWLPLHLSRILKLTLY) threads the bilayer. Residues 352-363 (DQNDSNRCELLS) lie on the Extracellular side of the membrane. N-linked (GlcNAc...) asparagine glycosylation occurs at Asn-354. A helical transmembrane segment spans residues 364-390 (FLLVLDYIGINMASLNSCINPIALYLV). Topologically, residues 391 to 443 (SKRFKNCFKSCLCCWCQSFEEKQSLEEKQSCLKFKANDHGYDNFRSSNKYSSS) are cytoplasmic. Residues Cys-403, Cys-404, and Cys-406 are each lipidated (S-palmitoyl cysteine). Ser-420 carries the post-translational modification Phosphoserine. At Tyr-440 the chain carries Phosphotyrosine. Phosphoserine occurs at positions 441, 442, and 443.

The protein belongs to the G-protein coupled receptor 1 family. Endothelin receptor subfamily. EDNRB sub-subfamily.

The protein localises to the cell membrane. In terms of biological role, non-specific receptor for endothelin 1, 2, and 3. Mediates its action by association with G proteins that activate a phosphatidylinositol-calcium second messenger system. This chain is Endothelin receptor type B (EDNRB), found in Sus scrofa (Pig).